Here is a 953-residue protein sequence, read N- to C-terminus: Catenin alpha-2 (953 aa).

The residue at position 632 (Thr632) is a Phosphothreonine. 3 positions are modified to phosphoserine: Ser640, Ser651, and Ser901. The span at 912–927 shows a compositional bias: basic and acidic residues; the sequence is EKKPLVKREKPEEFQT. The segment at 912–939 is disordered; it reads EKKPLVKREKPEEFQTRVRRGSQKKHIS. Residues 928 to 938 are compositionally biased toward basic residues; it reads RVRRGSQKKHI. Ser939 carries the post-translational modification Phosphoserine.

Belongs to the vinculin/alpha-catenin family. Interacts with CDH1 and CDH2. Interacts with ZNF639; recruits CTNNA2 to the nucleus. Interacts with F-actin. Expressed almost exclusively in the nervous system.

The protein resides in the cell membrane. It localises to the cytoplasm. The protein localises to the cytoskeleton. Its subcellular location is the cell junction. It is found in the adherens junction. The protein resides in the cell projection. It localises to the axon. The protein localises to the nucleus. May function as a linker between cadherin adhesion receptors and the cytoskeleton to regulate cell-cell adhesion and differentiation in the nervous system. Required for proper regulation of cortical neuronal migration and neurite growth. It acts as a negative regulator of Arp2/3 complex activity and Arp2/3-mediated actin polymerization. It thereby suppresses excessive actin branching which would impair neurite growth and stability. Regulates morphological plasticity of synapses and cerebellar and hippocampal lamination during development. Functions in the control of startle modulation. In Mus musculus (Mouse), this protein is Catenin alpha-2 (Ctnna2).